The primary structure comprises 344 residues: Lipase chaperone (344 aa).

The helical transmembrane segment at 14–34 (AVVYGAVGLAAIAGVAMWSGA) threads the bilayer. Positions 37–78 (HGGTGASGEPPDASAARGPAAAPPQAAVPASTSLPPSLAGSS) are disordered. The span at 43-78 (SGEPPDASAARGPAAAPPQAAVPASTSLPPSLAGSS) shows a compositional bias: low complexity.

Belongs to the lipase chaperone family.

The protein localises to the cell inner membrane. Functionally, may be involved in the folding of the extracellular lipase during its passage through the periplasm. In Burkholderia cepacia (Pseudomonas cepacia), this protein is Lipase chaperone (lifO).